Consider the following 203-residue polypeptide: Pyridoxine/pyridoxamine 5'-phosphate oxidase (203 aa).

FMN is bound by residues 51-56 (RMVLLK), 66-67 (YT), R72, K73, and Q95. K56 is a substrate binding site. Substrate-binding residues include Y113, R117, and S121. Residues 130-131 (QS) and W175 contribute to the FMN site. 181–183 (RLH) is a substrate binding site. Position 185 (R185) interacts with FMN.

This sequence belongs to the pyridoxamine 5'-phosphate oxidase family. As to quaternary structure, homodimer. FMN is required as a cofactor.

It catalyses the reaction pyridoxamine 5'-phosphate + O2 + H2O = pyridoxal 5'-phosphate + H2O2 + NH4(+). The enzyme catalyses pyridoxine 5'-phosphate + O2 = pyridoxal 5'-phosphate + H2O2. Its pathway is cofactor metabolism; pyridoxal 5'-phosphate salvage; pyridoxal 5'-phosphate from pyridoxamine 5'-phosphate: step 1/1. The protein operates within cofactor metabolism; pyridoxal 5'-phosphate salvage; pyridoxal 5'-phosphate from pyridoxine 5'-phosphate: step 1/1. Catalyzes the oxidation of either pyridoxine 5'-phosphate (PNP) or pyridoxamine 5'-phosphate (PMP) into pyridoxal 5'-phosphate (PLP). This is Pyridoxine/pyridoxamine 5'-phosphate oxidase from Novosphingobium aromaticivorans (strain ATCC 700278 / DSM 12444 / CCUG 56034 / CIP 105152 / NBRC 16084 / F199).